We begin with the raw amino-acid sequence, 301 residues long: Glycine cleavage system transcriptional activator homolog (301 aa).

An HTH lysR-type domain is found at 10–67 (PPLNSLKSFESAARYLSFTKAADELCVTQAAVSHQIKLLEXFLGIDLFKRKNRSLELT). A DNA-binding region (H-T-H motif) is located at residues 27-46 (FTKAADELCVTQAAVSHQIK).

It belongs to the LysR transcriptional regulatory family.

The protein resides in the cytoplasm. Functionally, not known, the gcv operon regulated by the E.coli homolog does not exist in H.influenzae, so it probably acts as a transcriptional regulator on some other operon. This Haemophilus influenzae (strain ATCC 51907 / DSM 11121 / KW20 / Rd) protein is Glycine cleavage system transcriptional activator homolog (gcvA).